The chain runs to 195 residues: Morphogenetic protein (195 aa).

Its function is as follows. Assembly factor active in membrane morphogenesis. The protein is Morphogenetic protein (P12) of Pseudomonas phage phi6 (Bacteriophage phi-6).